Here is a 365-residue protein sequence, read N- to C-terminus: Alpha-keto acid-binding periplasmic protein TakP (365 aa).

A signal peptide (tat-type signal) is located at residues 1 to 26; sequence MDRRSFITKAAVGGAAASALAAPALA. Substrate-binding positions include 99 to 100, glutamine 156, and arginine 177; that span reads YY. Residue glutamine 156 participates in Na(+) binding. Residues glutamate 214, tryptophan 215, and glutamate 240 each contribute to the Na(+) site.

It belongs to the bacterial solute-binding protein 7 family. As to quaternary structure, homodimer. The complex comprises the extracytoplasmic solute receptor protein TakP, and the two transmembrane proteins TakQ and TakM. Predicted to be exported by the Tat system. The position of the signal peptide cleavage has not been experimentally proven.

The protein localises to the periplasm. Its function is as follows. Part of the tripartite ATP-independent periplasmic (TRAP) transport system TakPQM involved in the uptake of alpha-keto acids. This protein specifically binds alpha-keto acids including pyruvate, oxobutyrate, oxovalerate and 4-methyl-2-oxovalerate. Ligand-binding affinity increases with the increasing chain length of the aliphatic backbone of the ligand. Is not able to bind alpha-ketoglutarate. This Cereibacter sphaeroides (strain ATCC 17023 / DSM 158 / JCM 6121 / CCUG 31486 / LMG 2827 / NBRC 12203 / NCIMB 8253 / ATH 2.4.1.) (Rhodobacter sphaeroides) protein is Alpha-keto acid-binding periplasmic protein TakP.